Reading from the N-terminus, the 294-residue chain is Cell division protein ZipA (294 aa).

Met-1 is a topological domain (periplasmic). Residues 2–22 traverse the membrane as a helical segment; it reads EIGLREWLILIGIIVIAGILF. At 23 to 294 the chain is on the cytoplasmic side; the sequence is DGWRRMRGGK…FERRALTQKR (272 aa). 2 disordered regions span residues 64-111 and 126-146; these read THKE…GDLN and KDDF…STPV. Residues 82–91 show a composition bias toward basic and acidic residues; that stretch reads ARERERDPKP.

This sequence belongs to the ZipA family. In terms of assembly, interacts with FtsZ via their C-terminal domains.

Its subcellular location is the cell inner membrane. Essential cell division protein that stabilizes the FtsZ protofilaments by cross-linking them and that serves as a cytoplasmic membrane anchor for the Z ring. Also required for the recruitment to the septal ring of downstream cell division proteins. In Pseudomonas entomophila (strain L48), this protein is Cell division protein ZipA.